Reading from the N-terminus, the 286-residue chain is L-ribulose 3-epimerase (286 aa).

Residues His-12, Ser-69, Glu-152, and Glu-158 each contribute to the D-allulose site. The D-fructose site is built by His-12, Ser-69, Glu-152, and Glu-158. The active-site Proton donor/acceptor is the Glu-152. Residue Glu-152 coordinates Mn(2+). Asp-185 serves as a coordination point for Mn(2+). Residues His-188, His-211, Arg-217, and Glu-246 each contribute to the D-allulose site. D-fructose contacts are provided by His-188, His-211, Arg-217, and Glu-246. Residue His-211 coordinates Mn(2+). Glu-246 serves as the catalytic Proton donor/acceptor. Residue Glu-246 coordinates Mn(2+).

The protein belongs to the hyi family. In terms of assembly, homodimer. Mn(2+) serves as cofactor.

The catalysed reaction is L-ribulose = L-xylulose. It catalyses the reaction D-ribulose = D-xylulose. It carries out the reaction D-allulose = keto-D-fructose. The enzyme catalyses keto-L-tagatose = keto-L-sorbose. The catalysed reaction is keto-D-tagatose = keto-D-sorbose. Functionally, catalyzes the epimerization of various ketoses at the C(3) position. Exhibits the highest enzymatic activity toward L-ribulose, followed by D-ribulose, D-allulose and D-fructose. Shows lower activity with L-xylulose, L-tagatose, D-xylulose, D-tagatose, L-sorbose, D-sorbose, and weak activity with L-allulose and L-fructose. The protein is L-ribulose 3-epimerase of Methylomonas sp. (strain DH-1).